A 201-amino-acid chain; its full sequence is UPF0637 protein LCA_0842 (201 aa).

It belongs to the UPF0637 family.

In Latilactobacillus sakei subsp. sakei (strain 23K) (Lactobacillus sakei subsp. sakei), this protein is UPF0637 protein LCA_0842.